We begin with the raw amino-acid sequence, 641 residues long: Macrolide export ATP-binding/permease protein MacB (641 aa).

The 235-residue stretch at 2–236 folds into the ABC transporter domain; it reads IFLKNICKNI…LTLKTMSKEK (235 aa). Position 34-41 (34-41) interacts with ATP; it reads GQSGSGKT. The next 4 helical transmembrane spans lie at 265–285, 519–539, 571–591, and 604–624; these read ILTM…VALG, ACVA…IMLV, MICT…IFAF, and AYSV…FGFF.

Belongs to the ABC transporter superfamily. Macrolide exporter (TC 3.A.1.122) family. Homodimer.

The protein resides in the cell inner membrane. Its function is as follows. Non-canonical ABC transporter that contains transmembrane domains (TMD), which form a pore in the inner membrane, and an ATP-binding domain (NBD), which is responsible for energy generation. Confers resistance against macrolides. The sequence is that of Macrolide export ATP-binding/permease protein MacB from Campylobacter jejuni subsp. jejuni serotype O:23/36 (strain 81-176).